The following is a 395-amino-acid chain: Dual specificity protein phosphatase 4 (395 aa).

Residue valine 2 is modified to N-acetylvaline. Residues 42–160 (SGGKCLLLDC…FSSEYPEFCS (119 aa)) enclose the Rhodanese domain. The 142-residue stretch at 196-337 (GPVEILPFLY…LLQFESQVLT (142 aa)) folds into the Tyrosine-protein phosphatase domain. Cysteine 281 serves as the catalytic Phosphocysteine intermediate. 2 positions are modified to phosphoserine; by MAPK: serine 387 and serine 392.

Belongs to the protein-tyrosine phosphatase family. Non-receptor class dual specificity subfamily. In terms of assembly, hollow spherical complex composed of 24 subunits with pseudooctahedral symmetry, has a tetramer as the basic unit. Phosphorylation in the C-terminus by ERK1/2 inhibits proteasomal degradation and stabilizes the protein. In terms of tissue distribution, expressed at moderate levels in nearly all tissues and cells including brain, spleen, and testes with the higher expression in the heart and lung and lower expression in skeletal muscle and kidney. Undetectable in liver. Expressed in many areas of the brain with very strong expression in the hippocampus, piriform cortex, and the suprachiasmatic nucleus.

Its subcellular location is the nucleus. It carries out the reaction O-phospho-L-tyrosyl-[protein] + H2O = L-tyrosyl-[protein] + phosphate. The catalysed reaction is O-phospho-L-seryl-[protein] + H2O = L-seryl-[protein] + phosphate. The enzyme catalyses O-phospho-L-threonyl-[protein] + H2O = L-threonyl-[protein] + phosphate. Functionally, regulates mitogenic signal transduction by dephosphorylating both Thr and Tyr residues on MAP kinases ERK1 and ERK2. The polypeptide is Dual specificity protein phosphatase 4 (Dusp4) (Rattus norvegicus (Rat)).